The following is a 432-amino-acid chain: D-amino acid dehydrogenase (432 aa).

3–17 (VVILGSGVVGVTSAW) contacts FAD.

The protein belongs to the DadA oxidoreductase family. FAD is required as a cofactor.

The catalysed reaction is a D-alpha-amino acid + A + H2O = a 2-oxocarboxylate + AH2 + NH4(+). It functions in the pathway amino-acid degradation; D-alanine degradation; NH(3) and pyruvate from D-alanine: step 1/1. In terms of biological role, oxidative deamination of D-amino acids. This is D-amino acid dehydrogenase from Salmonella paratyphi C (strain RKS4594).